The primary structure comprises 371 residues: tRNA-specific 2-thiouridylase MnmA (371 aa).

ATP-binding positions include 13–20 and Met-39; that span reads GMSGGVDS. An interaction with target base in tRNA region spans residues 99–101; sequence NPD. Cys-104 functions as the Nucleophile in the catalytic mechanism. A disulfide bond links Cys-104 and Cys-200. An ATP-binding site is contributed by Gly-128. An interaction with tRNA region spans residues 150 to 152; sequence KDQ. The Cysteine persulfide intermediate role is filled by Cys-200. The segment at 308–309 is interaction with tRNA; it reads RY.

Belongs to the MnmA/TRMU family.

It is found in the cytoplasm. The catalysed reaction is S-sulfanyl-L-cysteinyl-[protein] + uridine(34) in tRNA + AH2 + ATP = 2-thiouridine(34) in tRNA + L-cysteinyl-[protein] + A + AMP + diphosphate + H(+). In terms of biological role, catalyzes the 2-thiolation of uridine at the wobble position (U34) of tRNA, leading to the formation of s(2)U34. The polypeptide is tRNA-specific 2-thiouridylase MnmA (Listeria monocytogenes serotype 4a (strain HCC23)).